The primary structure comprises 554 residues: ATP synthase subunit alpha (554 aa).

173 to 180 (GDRQTGKT) lines the ATP pocket. The interval 531–554 (SHLAAEKVRKHVPPSKPTTQRTAG) is disordered.

It belongs to the ATPase alpha/beta chains family. As to quaternary structure, F-type ATPases have 2 components, CF(1) - the catalytic core - and CF(0) - the membrane proton channel. CF(1) has five subunits: alpha(3), beta(3), gamma(1), delta(1), epsilon(1). CF(0) has three main subunits: a(1), b(2) and c(9-12). The alpha and beta chains form an alternating ring which encloses part of the gamma chain. CF(1) is attached to CF(0) by a central stalk formed by the gamma and epsilon chains, while a peripheral stalk is formed by the delta and b chains.

The protein resides in the cell membrane. The catalysed reaction is ATP + H2O + 4 H(+)(in) = ADP + phosphate + 5 H(+)(out). Produces ATP from ADP in the presence of a proton gradient across the membrane. The alpha chain is a regulatory subunit. The polypeptide is ATP synthase subunit alpha (Acidothermus cellulolyticus (strain ATCC 43068 / DSM 8971 / 11B)).